The primary structure comprises 115 residues: MNTATRVIVAQNVRTRNRTFQITKQGVVIVALVIALLCSAFGVVYFKDLNRRLFIQYQTLQREKAEELIQWGKLLLEQTTWSTQSRVQRIAEQQLGMQLPSAKEVILVNADAMIE.

Over 1–25 the chain is Cytoplasmic; it reads MNTATRVIVAQNVRTRNRTFQITKQ. A helical membrane pass occupies residues 26–46; the sequence is GVVIVALVIALLCSAFGVVYF. The Periplasmic portion of the chain corresponds to 47–115; it reads KDLNRRLFIQ…ILVNADAMIE (69 aa).

Belongs to the FtsL family. Part of a complex composed of FtsB, FtsL and FtsQ.

It is found in the cell inner membrane. In terms of biological role, essential cell division protein. May link together the upstream cell division proteins, which are predominantly cytoplasmic, with the downstream cell division proteins, which are predominantly periplasmic. This chain is Cell division protein FtsL, found in Coxiella burnetii (strain RSA 493 / Nine Mile phase I).